The chain runs to 153 residues: Hemoglobin-3 (153 aa).

Ser2 is subject to N-acetylserine. One can recognise a Globin domain in the interval 4–150; it reads GLTGPQKAAL…ICRVQGDFMK (147 aa). His99 contributes to the heme b binding site.

It belongs to the globin family. Homotetramer.

The protein localises to the cytoplasm. The protein is Hemoglobin-3 of Phacoides pectinatus (Thick lucine).